The sequence spans 214 residues: Large ribosomal subunit protein uL3 (214 aa).

Residues 131 to 155 are disordered; it reads GAQRTSHGNSRSHRVPGSIGMAQDP. Glutamine 153 is subject to N5-methylglutamine.

It belongs to the universal ribosomal protein uL3 family. Part of the 50S ribosomal subunit. Forms a cluster with proteins L14 and L19. Methylated by PrmB.

Functionally, one of the primary rRNA binding proteins, it binds directly near the 3'-end of the 23S rRNA, where it nucleates assembly of the 50S subunit. In Neisseria gonorrhoeae (strain ATCC 700825 / FA 1090), this protein is Large ribosomal subunit protein uL3.